The primary structure comprises 633 residues: DNA-directed RNA polymerase subunit gamma (633 aa).

4 residues coordinate Zn(2+): Cys74, Cys76, Cys89, and Cys92. Residues Asp471, Asp473, and Asp475 each coordinate Mg(2+).

It belongs to the RNA polymerase beta' chain family. RpoC1 subfamily. As to quaternary structure, in cyanobacteria the RNAP catalytic core is composed of 2 alpha, 1 beta, 1 beta', 1 gamma and 1 omega subunit. When a sigma factor is associated with the core the holoenzyme is formed, which can initiate transcription. It depends on Mg(2+) as a cofactor. Requires Zn(2+) as cofactor.

It carries out the reaction RNA(n) + a ribonucleoside 5'-triphosphate = RNA(n+1) + diphosphate. Its function is as follows. DNA-dependent RNA polymerase catalyzes the transcription of DNA into RNA using the four ribonucleoside triphosphates as substrates. The protein is DNA-directed RNA polymerase subunit gamma of Prochlorococcus marinus (strain MIT 9211).